An 84-amino-acid chain; its full sequence is ATP synthase subunit c (84 aa).

2 helical membrane passes run 13–33 (IAVG…WGLI) and 56–76 (FIFA…GFWF).

It belongs to the ATPase C chain family. In terms of assembly, F-type ATPases have 2 components, F(1) - the catalytic core - and F(0) - the membrane proton channel. F(1) has five subunits: alpha(3), beta(3), gamma(1), delta(1), epsilon(1). F(0) has three main subunits: a(1), b(2) and c(10-14). The alpha and beta chains form an alternating ring which encloses part of the gamma chain. F(1) is attached to F(0) by a central stalk formed by the gamma and epsilon chains, while a peripheral stalk is formed by the delta and b chains.

It localises to the cell inner membrane. F(1)F(0) ATP synthase produces ATP from ADP in the presence of a proton or sodium gradient. F-type ATPases consist of two structural domains, F(1) containing the extramembraneous catalytic core and F(0) containing the membrane proton channel, linked together by a central stalk and a peripheral stalk. During catalysis, ATP synthesis in the catalytic domain of F(1) is coupled via a rotary mechanism of the central stalk subunits to proton translocation. In terms of biological role, key component of the F(0) channel; it plays a direct role in translocation across the membrane. A homomeric c-ring of between 10-14 subunits forms the central stalk rotor element with the F(1) delta and epsilon subunits. The protein is ATP synthase subunit c of Acidithiobacillus ferrooxidans (strain ATCC 23270 / DSM 14882 / CIP 104768 / NCIMB 8455) (Ferrobacillus ferrooxidans (strain ATCC 23270)).